The primary structure comprises 100 residues: uncharacterized protein (100 aa).

This is an uncharacterized protein from Mycoplasma pneumoniae (strain ATCC 29342 / M129 / Subtype 1) (Mycoplasmoides pneumoniae).